The sequence spans 508 residues: Endo-4-O-sulfatase (508 aa).

At serine 84 the chain carries 3-oxoalanine (Ser).

This sequence belongs to the sulfatase family. The conversion to 3-oxoalanine (also known as C-formylglycine, FGly), of a serine or cysteine residue in prokaryotes and of a cysteine residue in eukaryotes, is critical for catalytic activity.

Its function is as follows. Endosulfatase involved in the degradation of the glycosaminoglycans (GAGs) chondroitin sulfate (CS) and dermatan sulfate (DS). Efficiently hydrolyzes sulfate groups from a broad range of substrate size, including disaccharide to high molecular weight CS and DS polymers. Has a strict specificity for the 4-O-sulfate groups of galactosamine. GAG-specific sulfatases play a key role in the persistence of the major human gut symbiont B.thetaiotaomicron in the host gastrointestinal tract. In Bacteroides thetaiotaomicron (strain ATCC 29148 / DSM 2079 / JCM 5827 / CCUG 10774 / NCTC 10582 / VPI-5482 / E50), this protein is Endo-4-O-sulfatase.